The following is a 702-amino-acid chain: Polyribonucleotide nucleotidyltransferase (702 aa).

Aspartate 485 and aspartate 491 together coordinate Mg(2+). A KH domain is found at 552 to 611 (PRITTLKINPEKIRDVIGKGGATIRALTEETGTTIELEDDGTVKIASANGEATKEAIRRI). The S1 motif domain maps to 621–689 (GTVYNGKVVR…RQGRVRLSMK (69 aa)).

The protein belongs to the polyribonucleotide nucleotidyltransferase family. Component of the RNA degradosome, which is a multiprotein complex involved in RNA processing and mRNA degradation. It depends on Mg(2+) as a cofactor.

The protein resides in the cytoplasm. The catalysed reaction is RNA(n+1) + phosphate = RNA(n) + a ribonucleoside 5'-diphosphate. Functionally, involved in mRNA degradation. Catalyzes the phosphorolysis of single-stranded polyribonucleotides processively in the 3'- to 5'-direction. The sequence is that of Polyribonucleotide nucleotidyltransferase from Shewanella woodyi (strain ATCC 51908 / MS32).